The following is a 234-amino-acid chain: MAHTTPRSHPPPHSLLQNLTTQSLLLSHLFTLIASPPNPNTSTQTQLNQVYSALQLSTLDLSGLVKEVGHHQEAYRRLVEKKNEVAGLEMRVRGLVKRLEEGRKELEGMIDQGERSLEDIEKSEREPVPAKTLMAHAQSLSKHSSAPVSSLLAPVDKAQYAPWPTEMSMRMGLLFQLEGSMSGMGERGVVGEEQKAPQKVEERREHVEHEESDRRYDPNAVFQLDLNSDESDED.

A coiled-coil region spans residues 71–124 (HQEAYRRLVEKKNEVAGLEMRVRGLVKRLEEGRKELEGMIDQGERSLEDIEKSE). Residues 188-234 (GVVGEEQKAPQKVEERREHVEHEESDRRYDPNAVFQLDLNSDESDED) form a disordered region. Basic and acidic residues predominate over residues 189 to 217 (VVGEEQKAPQKVEERREHVEHEESDRRYD).

Belongs to the Mediator complex subunit 4 family. Component of the Mediator complex.

It localises to the nucleus. Functionally, component of the Mediator complex, a coactivator involved in the regulated transcription of nearly all RNA polymerase II-dependent genes. Mediator functions as a bridge to convey information from gene-specific regulatory proteins to the basal RNA polymerase II transcription machinery. Mediator is recruited to promoters by direct interactions with regulatory proteins and serves as a scaffold for the assembly of a functional preinitiation complex with RNA polymerase II and the general transcription factors. The protein is Mediator of RNA polymerase II transcription subunit 4 (MED4) of Cryptococcus neoformans var. neoformans serotype D (strain JEC21 / ATCC MYA-565) (Filobasidiella neoformans).